The primary structure comprises 201 residues: Small ribosomal subunit protein uS4 (201 aa).

Residues 93–155 (CRLDNIVYRM…SKSLSMFEVN (63 aa)) form the S4 RNA-binding domain.

This sequence belongs to the universal ribosomal protein uS4 family. In terms of assembly, part of the 30S ribosomal subunit. Contacts protein S5. The interaction surface between S4 and S5 is involved in control of translational fidelity.

Its function is as follows. One of the primary rRNA binding proteins, it binds directly to 16S rRNA where it nucleates assembly of the body of the 30S subunit. In terms of biological role, with S5 and S12 plays an important role in translational accuracy. This chain is Small ribosomal subunit protein uS4, found in Elusimicrobium minutum (strain Pei191).